The following is a 332-amino-acid chain: tRNA dimethylallyltransferase (332 aa).

Residue G30 to T37 participates in ATP binding. Residue T32–T37 coordinates substrate. The interval D57–Q60 is interaction with substrate tRNA.

The protein belongs to the IPP transferase family. In terms of assembly, monomer. Mg(2+) is required as a cofactor.

The enzyme catalyses adenosine(37) in tRNA + dimethylallyl diphosphate = N(6)-dimethylallyladenosine(37) in tRNA + diphosphate. Its function is as follows. Catalyzes the transfer of a dimethylallyl group onto the adenine at position 37 in tRNAs that read codons beginning with uridine, leading to the formation of N6-(dimethylallyl)adenosine (i(6)A). The sequence is that of tRNA dimethylallyltransferase from Natranaerobius thermophilus (strain ATCC BAA-1301 / DSM 18059 / JW/NM-WN-LF).